We begin with the raw amino-acid sequence, 202 residues long: Imidazoleglycerol-phosphate dehydratase (202 aa).

The protein belongs to the imidazoleglycerol-phosphate dehydratase family.

It is found in the cytoplasm. It carries out the reaction D-erythro-1-(imidazol-4-yl)glycerol 3-phosphate = 3-(imidazol-4-yl)-2-oxopropyl phosphate + H2O. The protein operates within amino-acid biosynthesis; L-histidine biosynthesis; L-histidine from 5-phospho-alpha-D-ribose 1-diphosphate: step 6/9. The protein is Imidazoleglycerol-phosphate dehydratase of Brucella anthropi (strain ATCC 49188 / DSM 6882 / CCUG 24695 / JCM 21032 / LMG 3331 / NBRC 15819 / NCTC 12168 / Alc 37) (Ochrobactrum anthropi).